A 204-amino-acid chain; its full sequence is SOSS complex subunit B homolog (204 aa).

The OB DNA-binding region spans 24–94 (IVLEVGVATV…TLYSGKNGEV (71 aa)). The segment at 115 to 204 (RAEQQAVANP…GRGGLKGERR (90 aa)) is disordered. 2 stretches are compositionally biased toward low complexity: residues 122-131 (ANPAATPAGL) and 139-183 (GLPA…QTTT). The segment covering 187–198 (TRGGRGGGGRGG) has biased composition (gly residues).

The protein belongs to the SOSS-B family.

This Drosophila melanogaster (Fruit fly) protein is SOSS complex subunit B homolog.